The primary structure comprises 161 residues: MLRLPEAHRDLFKKPFGTLYTSVDELLPRLEGRAVYAVGDVVTHNLLAAGVVPDIAIIDGYTMRTPCNRSPLLRARRLTVKNPPGTITGELTDAIDEAVRGQPAVIFVDGEEDLAVIPLVLAAPDGAAVLYGQPAEGVVLRLVDTAAKQEAASMLSIFVRE.

GTP contacts are provided by Asp40, Val41, Val42, Asp59, and Glu112.

Belongs to the GTP-dependent DPCK family.

The enzyme catalyses 3'-dephospho-CoA + GTP = GDP + CoA + H(+). The protein operates within cofactor biosynthesis; coenzyme A biosynthesis. Catalyzes the GTP-dependent phosphorylation of the 3'-hydroxyl group of dephosphocoenzyme A to form coenzyme A (CoA). In Methanoculleus marisnigri (strain ATCC 35101 / DSM 1498 / JR1), this protein is GTP-dependent dephospho-CoA kinase.